A 975-amino-acid chain; its full sequence is Translation initiation factor IF-2 (975 aa).

Disordered regions lie at residues 49–110 (KLSG…APKA) and 193–339 (AAAP…GRGA). Over residues 63–72 (KKTAARKAAP) the composition is skewed to basic residues. Composition is skewed to low complexity over residues 73-94 (KKAA…AKTP), 193-202 (AAAPEAPAPQ), and 209-225 (VVGT…ASAP). Residues 308–318 (GADRGGRDFDK) show a composition bias toward basic and acidic residues. The segment covering 324-336 (GPSAPAAGPAAAG) has biased composition (low complexity). The 171-residue stretch at 469–639 (TRPPVVTVMG…KLVAEVAELK (171 aa)) folds into the tr-type G domain. Residues 478–485 (GHVDHGKT) are G1. Position 478 to 485 (478 to 485 (GHVDHGKT)) interacts with GTP. The G2 stretch occupies residues 503–507 (GITQH). The tract at residues 525–528 (DTPG) is G3. GTP contacts are provided by residues 525 to 529 (DTPGH) and 579 to 582 (NKID). A G4 region spans residues 579 to 582 (NKID). Residues 615-617 (SAL) are G5.

The protein belongs to the TRAFAC class translation factor GTPase superfamily. Classic translation factor GTPase family. IF-2 subfamily.

The protein resides in the cytoplasm. Functionally, one of the essential components for the initiation of protein synthesis. Protects formylmethionyl-tRNA from spontaneous hydrolysis and promotes its binding to the 30S ribosomal subunits. Also involved in the hydrolysis of GTP during the formation of the 70S ribosomal complex. This is Translation initiation factor IF-2 from Bdellovibrio bacteriovorus (strain ATCC 15356 / DSM 50701 / NCIMB 9529 / HD100).